The primary structure comprises 648 residues: Biosynthetic arginine decarboxylase (648 aa).

Lys109 is subject to N6-(pyridoxal phosphate)lysine. 291 to 301 serves as a coordination point for substrate; it reads IDVGGGLGIDF.

It belongs to the Orn/Lys/Arg decarboxylase class-II family. SpeA subfamily. Requires Mg(2+) as cofactor. It depends on pyridoxal 5'-phosphate as a cofactor.

It catalyses the reaction L-arginine + H(+) = agmatine + CO2. In terms of biological role, catalyzes the biosynthesis of agmatine from arginine. The chain is Biosynthetic arginine decarboxylase from Prochlorococcus marinus subsp. pastoris (strain CCMP1986 / NIES-2087 / MED4).